The sequence spans 256 residues: Kallikrein-15 (256 aa).

The N-terminal stretch at 1-16 is a signal peptide; the sequence is MWLLLTLSFLLASTAA. Residues 17–21 constitute a propeptide, activation peptide; sequence QDGDK. A Peptidase S1 domain is found at 22-254; that stretch reads LLEGDECAPH…YLEWIRETMK (233 aa). The cysteines at positions 47 and 63 are disulfide-linked. Residues His-62 and Asp-106 each act as charge relay system in the active site. 3 disulfides stabilise this stretch: Cys-138–Cys-215, Cys-180–Cys-194, and Cys-205–Cys-230. Residue Asn-171 is glycosylated (N-linked (GlcNAc...) asparagine). The active-site Charge relay system is Ser-209. Asn-232 carries N-linked (GlcNAc...) asparagine glycosylation.

The protein belongs to the peptidase S1 family. Kallikrein subfamily. Highest expression in the thyroid gland. Also expressed in the prostate, salivary, and adrenal glands and in the colon testis and kidney.

It is found in the secreted. Protease whose physiological substrate is not yet known. This Homo sapiens (Human) protein is Kallikrein-15 (KLK15).